The following is a 274-amino-acid chain: Formamidopyrimidine-DNA glycosylase (274 aa).

Pro2 functions as the Schiff-base intermediate with DNA in the catalytic mechanism. Glu3 serves as the catalytic Proton donor. The Proton donor; for beta-elimination activity role is filled by Lys58. Positions 91 and 110 each coordinate DNA. Residues 238–272 (QVYDKTGQECVRCGTIIEKIQLGGRGTHFCPNCQR) form an FPG-type zinc finger. Arg262 functions as the Proton donor; for delta-elimination activity in the catalytic mechanism.

This sequence belongs to the FPG family. In terms of assembly, monomer. Zn(2+) serves as cofactor.

It carries out the reaction Hydrolysis of DNA containing ring-opened 7-methylguanine residues, releasing 2,6-diamino-4-hydroxy-5-(N-methyl)formamidopyrimidine.. The catalysed reaction is 2'-deoxyribonucleotide-(2'-deoxyribose 5'-phosphate)-2'-deoxyribonucleotide-DNA = a 3'-end 2'-deoxyribonucleotide-(2,3-dehydro-2,3-deoxyribose 5'-phosphate)-DNA + a 5'-end 5'-phospho-2'-deoxyribonucleoside-DNA + H(+). In terms of biological role, involved in base excision repair of DNA damaged by oxidation or by mutagenic agents. Acts as a DNA glycosylase that recognizes and removes damaged bases. Has a preference for oxidized purines, such as 7,8-dihydro-8-oxoguanine (8-oxoG). Has AP (apurinic/apyrimidinic) lyase activity and introduces nicks in the DNA strand. Cleaves the DNA backbone by beta-delta elimination to generate a single-strand break at the site of the removed base with both 3'- and 5'-phosphates. The sequence is that of Formamidopyrimidine-DNA glycosylase from Streptococcus pneumoniae serotype 4 (strain ATCC BAA-334 / TIGR4).